A 1112-amino-acid chain; its full sequence is DNA-directed RNA polymerase subunit beta (1112 aa).

Positions 1087-1112 are disordered; sequence VGGRRTPNRPTYENIGGPREMEFSED.

The protein belongs to the RNA polymerase beta chain family. In cyanobacteria the RNAP catalytic core is composed of 2 alpha, 1 beta, 1 beta', 1 gamma and 1 omega subunit. When a sigma factor is associated with the core the holoenzyme is formed, which can initiate transcription.

The catalysed reaction is RNA(n) + a ribonucleoside 5'-triphosphate = RNA(n+1) + diphosphate. In terms of biological role, DNA-dependent RNA polymerase catalyzes the transcription of DNA into RNA using the four ribonucleoside triphosphates as substrates. The sequence is that of DNA-directed RNA polymerase subunit beta from Gloeobacter violaceus (strain ATCC 29082 / PCC 7421).